Here is a 376-residue protein sequence, read N- to C-terminus: Sulfate/thiosulfate import ATP-binding protein CysA 1 (376 aa).

The ABC transporter domain occupies 3–237 (IRLTNISKKF…PNSRFVFDFL (235 aa)). 35 to 42 (GPSGSGKT) serves as a coordination point for ATP.

Belongs to the ABC transporter superfamily. Sulfate/tungstate importer (TC 3.A.1.6) family. The complex is composed of two ATP-binding proteins (CysA), two transmembrane proteins (CysT and CysW) and a solute-binding protein (CysP).

It localises to the cell inner membrane. The enzyme catalyses sulfate(out) + ATP + H2O = sulfate(in) + ADP + phosphate + H(+). It carries out the reaction thiosulfate(out) + ATP + H2O = thiosulfate(in) + ADP + phosphate + H(+). Functionally, part of the ABC transporter complex CysAWTP involved in sulfate/thiosulfate import. Responsible for energy coupling to the transport system. This chain is Sulfate/thiosulfate import ATP-binding protein CysA 1, found in Shewanella oneidensis (strain ATCC 700550 / JCM 31522 / CIP 106686 / LMG 19005 / NCIMB 14063 / MR-1).